Here is a 485-residue protein sequence, read N- to C-terminus: NADH-quinone oxidoreductase subunit N (485 aa).

A run of 14 helical transmembrane segments spans residues 8–28 (LIAL…MLSI), 35–55 (FLNA…LWFV), 71–91 (GFAM…CTFA), 105–125 (FYLL…ANHL), 127–147 (ALFL…GYAF), 159–179 (YTIL…LVYA), 203–223 (LLAG…LVPF), 235–255 (PAPV…GVVM), 271–291 (VVLG…ALSQ), 297–317 (LLGY…IALQ), 326–346 (VGVY…VVSL), 373–393 (AAVM…LGFI), 408–430 (WWLV…RVAV), and 455–475 (IVVL…QPLI).

Belongs to the complex I subunit 2 family. NDH-1 is composed of 13 different subunits. Subunits NuoA, H, J, K, L, M, N constitute the membrane sector of the complex.

The protein resides in the cell inner membrane. It catalyses the reaction a quinone + NADH + 5 H(+)(in) = a quinol + NAD(+) + 4 H(+)(out). Functionally, NDH-1 shuttles electrons from NADH, via FMN and iron-sulfur (Fe-S) centers, to quinones in the respiratory chain. The immediate electron acceptor for the enzyme in this species is believed to be ubiquinone. Couples the redox reaction to proton translocation (for every two electrons transferred, four hydrogen ions are translocated across the cytoplasmic membrane), and thus conserves the redox energy in a proton gradient. The protein is NADH-quinone oxidoreductase subunit N of Salmonella arizonae (strain ATCC BAA-731 / CDC346-86 / RSK2980).